A 94-amino-acid chain; its full sequence is MSEEKPREGVKTENDHINLKVAGQDGSVVQFKIKRHTPLSKLMKAYCERQGLSIRQIRFRFDGQPINETDTPAQLEMEDEDTIDVFQQQTGGSC.

Lys11 participates in a covalent cross-link: Glycyl lysine isopeptide (Lys-Gly) (interchain with G-Cter in SUMO). The region spanning 15-92 is the Ubiquitin-like domain; it reads DHINLKVAGQ…IDVFQQQTGG (78 aa). A Glycyl lysine isopeptide (Gly-Lys) (interchain with K-? in acceptor proteins) cross-link involves residue Gly92. Residues 93 to 94 constitute a propeptide that is removed on maturation; it reads SC.

The protein belongs to the ubiquitin family. SUMO subfamily. As to quaternary structure, interacts with sae2 and ube2i. Covalently attached to a number of proteins. Post-translationally, polymeric chains can be formed through Lys-11 cross-linking. Cleavage of precursor form by a sentrin-specific protease is necessary for function.

The protein resides in the cytoplasm. It localises to the nucleus. It is found in the PML body. In terms of biological role, ubiquitin-like protein which can be covalently attached to target lysines either as a monomer or as a lysine-linked polymer. Does not seem to be involved in protein degradation and may function as an antagonist of ubiquitin in the degradation process. Plays a role in a number of cellular processes such as nuclear transport, DNA replication and repair, mitosis and signal transduction. Covalent attachment to its substrates requires prior activation by the E1 complex sae1-sae2 and linkage to the E2 enzyme ube2i. This chain is Small ubiquitin-related modifier 3 (sumo3), found in Danio rerio (Zebrafish).